The primary structure comprises 35 residues: Photosystem II reaction center protein Psb30 (35 aa).

Residues 6-26 traverse the membrane as a helical segment; it reads VIVQLVFLALIITTGPVIIVY.

Belongs to the Psb30/Ycf12 family. In terms of assembly, PSII is composed of 1 copy each of membrane proteins PsbA, PsbB, PsbC, PsbD, PsbE, PsbF, PsbH, PsbI, PsbJ, PsbK, PsbL, PsbM, PsbT, PsbY, PsbZ, Psb30/Ycf12, peripheral proteins of the oxygen-evolving complex and a large number of cofactors. It forms dimeric complexes.

It localises to the plastid. The protein localises to the chloroplast thylakoid membrane. A core subunit of photosystem II (PSII), probably helps stabilize the reaction center. This chain is Photosystem II reaction center protein Psb30, found in Cyanidium caldarium (Red alga).